Here is a 491-residue protein sequence, read N- to C-terminus: Aspartyl/glutamyl-tRNA(Asn/Gln) amidotransferase subunit B (491 aa).

The protein belongs to the GatB/GatE family. GatB subfamily. Heterotrimer of A, B and C subunits.

It catalyses the reaction L-glutamyl-tRNA(Gln) + L-glutamine + ATP + H2O = L-glutaminyl-tRNA(Gln) + L-glutamate + ADP + phosphate + H(+). The catalysed reaction is L-aspartyl-tRNA(Asn) + L-glutamine + ATP + H2O = L-asparaginyl-tRNA(Asn) + L-glutamate + ADP + phosphate + 2 H(+). In terms of biological role, allows the formation of correctly charged Asn-tRNA(Asn) or Gln-tRNA(Gln) through the transamidation of misacylated Asp-tRNA(Asn) or Glu-tRNA(Gln) in organisms which lack either or both of asparaginyl-tRNA or glutaminyl-tRNA synthetases. The reaction takes place in the presence of glutamine and ATP through an activated phospho-Asp-tRNA(Asn) or phospho-Glu-tRNA(Gln). The protein is Aspartyl/glutamyl-tRNA(Asn/Gln) amidotransferase subunit B of Nostoc punctiforme (strain ATCC 29133 / PCC 73102).